Reading from the N-terminus, the 133-residue chain is Small ribosomal subunit protein uS11 (133 aa).

Belongs to the universal ribosomal protein uS11 family. Part of the 30S ribosomal subunit. Interacts with proteins S7 and S18. Binds to IF-3.

In terms of biological role, located on the platform of the 30S subunit, it bridges several disparate RNA helices of the 16S rRNA. Forms part of the Shine-Dalgarno cleft in the 70S ribosome. The protein is Small ribosomal subunit protein uS11 of Bordetella avium (strain 197N).